Reading from the N-terminus, the 669-residue chain is Translation factor GUF1, mitochondrial (669 aa).

A mitochondrion-targeting transit peptide spans 1–49 (MWTLAGQGWWRGRALAAWVTEAARKGLLWPHLAPARGTAAESRAPDRCY). A tr-type G domain is found at 66–247 (ENTRNFSIIA…AVIKRIPFPK (182 aa)). Residues 75 to 82 (AHVDHGKS), 140 to 144 (DTPGH), and 194 to 197 (NKID) each bind GTP.

This sequence belongs to the TRAFAC class translation factor GTPase superfamily. Classic translation factor GTPase family. LepA subfamily.

It is found in the mitochondrion inner membrane. It catalyses the reaction GTP + H2O = GDP + phosphate + H(+). Its function is as follows. Promotes mitochondrial protein synthesis. May act as a fidelity factor of the translation reaction, by catalyzing a one-codon backward translocation of tRNAs on improperly translocated ribosomes. Binds to mitochondrial ribosomes in a GTP-dependent manner. The sequence is that of Translation factor GUF1, mitochondrial from Bos taurus (Bovine).